The sequence spans 503 residues: Protein O-glucosyltransferase 3 (503 aa).

An N-terminal signal peptide occupies residues 1–19 (MQALPLGLQLALLVAAGAG). Residues 19 to 129 (GARVSAPRSL…VAHSPYILKG (111 aa)) form a Filamin repeat. Residues N56 and N302 are each glycosylated (N-linked (GlcNAc...) asparagine). The short motif at 500 to 503 (REEL) is the Prevents secretion from ER element.

The protein belongs to the KDELC family.

It is found in the endoplasmic reticulum lumen. It carries out the reaction L-seryl-[EGF-like domain protein] + UDP-alpha-D-glucose = 3-O-(beta-D-glucosyl)-L-seryl-[EGF-like domain protein] + UDP + H(+). The enzyme catalyses L-seryl-[EGF-like domain protein] + UDP-alpha-D-xylose = 3-O-(beta-D-xylosyl)-L-seryl-[EGF-like domain protein] + UDP + H(+). It functions in the pathway protein modification; protein glycosylation. Protein glucosyltransferase that catalyzes the transfer of glucose from UDP-glucose to a serine residue within the consensus sequence peptide C-X-N-T-X-G-S-F-X-C. Can also catalyze the transfer of xylose from UDP-xylose but less efficiently. Specifically targets extracellular EGF repeats of proteins such as NOTCH1, NOTCH3, FBN1, FBN2 and LTBP1. May regulate the transport of NOTCH1 and NOTCH3 to the plasma membrane and thereby the Notch signaling pathway. This Mus musculus (Mouse) protein is Protein O-glucosyltransferase 3 (Poglut3).